Reading from the N-terminus, the 267-residue chain is tRNA pseudouridine synthase A (267 aa).

The active-site Nucleophile is the D53. Y114 is a binding site for substrate.

The protein belongs to the tRNA pseudouridine synthase TruA family. In terms of assembly, homodimer.

It catalyses the reaction uridine(38/39/40) in tRNA = pseudouridine(38/39/40) in tRNA. Functionally, formation of pseudouridine at positions 38, 39 and 40 in the anticodon stem and loop of transfer RNAs. This chain is tRNA pseudouridine synthase A, found in Chlamydia muridarum (strain MoPn / Nigg).